The following is a 91-amino-acid chain: Protein xpaR7 (91 aa).

This is Protein xpaR7 (xpaR7) from Bacillus licheniformis.